A 131-amino-acid polypeptide reads, in one-letter code: Ribonuclease P protein component (131 aa).

This sequence belongs to the RnpA family. As to quaternary structure, consists of a catalytic RNA component (M1 or rnpB) and a protein subunit.

It carries out the reaction Endonucleolytic cleavage of RNA, removing 5'-extranucleotides from tRNA precursor.. RNaseP catalyzes the removal of the 5'-leader sequence from pre-tRNA to produce the mature 5'-terminus. It can also cleave other RNA substrates such as 4.5S RNA. The protein component plays an auxiliary but essential role in vivo by binding to the 5'-leader sequence and broadening the substrate specificity of the ribozyme. The sequence is that of Ribonuclease P protein component from Synechococcus sp. (strain WH7803).